We begin with the raw amino-acid sequence, 410 residues long: Mating-type locus allele B3 protein (410 aa).

The tract at residues 1-110 (MSRDPKLSLS…ANVVSPGEGC (110 aa)) is variable domain between B alleles. Positions 107–184 (GEGCRNLSED…NARRRSGWSH (78 aa)) form a DNA-binding region, homeobox; TALE-type. Positions 111 to 410 (RNLSEDLPAY…PFLCLSVAFV (300 aa)) are highly conserved between B alleles. Disordered regions lie at residues 203-224 (AKLS…PSDD) and 278-335 (TPKP…TPEL). Residues 205 to 219 (LSSSNQSTPPSLTSE) show a composition bias toward polar residues. The Nuclear localization signal motif lies at 276–308 (KKTPKPGMPRPVTTVAKRHPARKTKPAAKPKSR). Residues 291–307 (AKRHPARKTKPAAKPKS) show a composition bias toward basic residues. Residues 312-335 (PRASTTPSIDSTLDSSKLESTPEL) are compositionally biased toward polar residues. The tract at residues 333–410 (PELSMCSTAD…PFLCLSVAFV (78 aa)) is not essential for B3 function.

The protein belongs to the TALE/M-ATYP homeobox family.

The protein resides in the nucleus. The B locus has at least 25 alleles, and any combination of two different B alleles yields a multimeric regulatory protein, that activates genes responsible for the pathogenicity and for the sexual development of the fungus within the corn plant. This Mycosarcoma maydis (Corn smut fungus) protein is Mating-type locus allele B3 protein.